Reading from the N-terminus, the 275-residue chain is Cell division protein FtsQ (275 aa).

The tract at residues 1-20 is disordered; sequence MRDLHKKKPRPVTQNRLKKP. The Cytoplasmic segment spans residues 1–38; sequence MRDLHKKKPRPVTQNRLKKPPKTCKPINYRGILKKTAK. Residues 39 to 61 traverse the membrane as a helical segment; the sequence is VVGGAALISAVGCAGYGIYRIIA. Topologically, residues 62-275 are periplasmic; that stretch reads GTTFFKLERI…YSDKIIVKKV (214 aa). The 69-residue stretch at 66 to 134 folds into the POTRA domain; that stretch reads FKLERIEVSE…NTLSMQIAER (69 aa).

The protein belongs to the FtsQ/DivIB family. FtsQ subfamily.

It is found in the cell inner membrane. Essential cell division protein. This is Cell division protein FtsQ from Geotalea daltonii (strain DSM 22248 / JCM 15807 / FRC-32) (Geobacter daltonii).